Consider the following 131-residue polypeptide: Small nuclear ribonucleoprotein SmD3b (131 aa).

Positions 7 to 79 (IPVKLLHEAS…VRFMVIPDIL (73 aa)) constitute a Sm domain. A disordered region spans residues 96–131 (SSSLGVGRGRGAMRGKPAAGPGRGTGGRGAVPPVRR).

It belongs to the snRNP core protein family. In terms of tissue distribution, expressed in young seedlings, roots, leaves, flowers and immature siliques.

The protein resides in the cytoplasm. It is found in the cytosol. The protein localises to the nucleus. In terms of biological role, core component of the spliceosomal U1, U2, U4 and U5 small nuclear ribonucleoproteins (snRNPs), the building blocks of the spliceosome. May play a major role in the splicing of cellular pre-mRNAs. Required for normal plant development. This Arabidopsis thaliana (Mouse-ear cress) protein is Small nuclear ribonucleoprotein SmD3b.